The following is a 129-amino-acid chain: MFSSFFGNTCSWVFIFIIIVDNEAFLHFSCLIFVFINIFVFLRGVKDIFSFFFLTRRFSFIVVIYYFFLVPRDQLRISRLFHKRQILCKDSRQLMTCSLGLFFKAQINIFLPPFALTVVQFLVNLVCHT.

The next 3 membrane-spanning stretches (helical) occupy residues 15–35, 48–68, and 107–127; these read IFII…IFVF, IFSF…YYFF, and INIF…NLVC.

Its subcellular location is the membrane. This is an uncharacterized protein from Saccharomyces cerevisiae (strain ATCC 204508 / S288c) (Baker's yeast).